The sequence spans 417 residues: NADH-quinone oxidoreductase subunit D (417 aa).

Belongs to the complex I 49 kDa subunit family. NDH-1 is composed of 14 different subunits. Subunits NuoB, C, D, E, F, and G constitute the peripheral sector of the complex.

It is found in the cell inner membrane. The catalysed reaction is a quinone + NADH + 5 H(+)(in) = a quinol + NAD(+) + 4 H(+)(out). Its function is as follows. NDH-1 shuttles electrons from NADH, via FMN and iron-sulfur (Fe-S) centers, to quinones in the respiratory chain. The immediate electron acceptor for the enzyme in this species is believed to be ubiquinone. Couples the redox reaction to proton translocation (for every two electrons transferred, four hydrogen ions are translocated across the cytoplasmic membrane), and thus conserves the redox energy in a proton gradient. In Methylobacillus flagellatus (strain ATCC 51484 / DSM 6875 / VKM B-1610 / KT), this protein is NADH-quinone oxidoreductase subunit D.